The following is a 324-amino-acid chain: DNA repair and recombination protein RadA (324 aa).

ATP is bound at residue 114-121 (GEFGSGKT).

Belongs to the eukaryotic RecA-like protein family.

Its function is as follows. Involved in DNA repair and in homologous recombination. Binds and assemble on single-stranded DNA to form a nucleoprotein filament. Hydrolyzes ATP in a ssDNA-dependent manner and promotes DNA strand exchange between homologous DNA molecules. The chain is DNA repair and recombination protein RadA from Saccharolobus islandicus (strain Y.N.15.51 / Yellowstone #2) (Sulfolobus islandicus).